The chain runs to 570 residues: Serine/threonine-protein kinase STY17 (570 aa).

A disordered region spans residues 112–145; that stretch reads LNGNSGDVDPSDPAVNEDAQSSYNSRSLAPPTFG. The span at 129 to 145 shows a compositional bias: polar residues; the sequence is DAQSSYNSRSLAPPTFG. Residues 180–260 enclose the ACT domain; that stretch reads EITFSTIDRP…PCSKQKSITF (81 aa). In terms of domain architecture, Protein kinase spans 292-545; that stretch reads LKIEKKVACG…EIIEMLNQLI (254 aa). ATP contacts are provided by residues 298–306 and K319; that span reads VACGSYGEL. D413 functions as the Proton acceptor in the catalytic mechanism. A Phosphoserine modification is found at S441. T445 is subject to Phosphothreonine.

Belongs to the protein kinase superfamily. Ser/Thr protein kinase family. In terms of processing, autophosphorylated on serine and threonine residues. Autophosphorylated at Thr-445.

The protein resides in the cytoplasm. It localises to the cytosol. It catalyses the reaction L-seryl-[protein] + ATP = O-phospho-L-seryl-[protein] + ADP + H(+). It carries out the reaction L-threonyl-[protein] + ATP = O-phospho-L-threonyl-[protein] + ADP + H(+). Activated by autophosphorylation at Thr-445. In terms of biological role, serine/threonine protein kinase that specifically phosphorylates chloroplast precursor proteins in the cytosol within the cleavable presequences (transit peptides). May be part of a cytosolic regulatory network involved in chloroplast protein import. Does not phosphorylate mitochondrion precursor proteins. Specific for ATP and does not utilize other NTPs. Plays a role in chloroplast biogenesis and differentiation in cotyledons, possibly through phosphorylation of chloroplast preproteins. The chain is Serine/threonine-protein kinase STY17 from Arabidopsis thaliana (Mouse-ear cress).